Consider the following 214-residue polypeptide: Auxin-binding protein ABP20 (214 aa).

An N-terminal signal peptide occupies residues 1 to 23 (MPQATMIFPILFTFFLLLSSSNA). A disulfide bridge links Cys29 with Cys44. Residues 58–204 (SGLGIAGNTS…TTFLDAAQIK (147 aa)) form the Cupin type-1 domain. N-linked (GlcNAc...) asparagine glycosylation occurs at Asn65. Mn(2+) contacts are provided by His106, His108, Glu113, and His152.

Belongs to the germin family. In terms of assembly, interacts with ABP19.

Its subcellular location is the secreted. The protein localises to the extracellular space. It is found in the apoplast. It localises to the cell wall. Functionally, probable receptor for the plant growth-promoting hormone auxin. This Prunus persica (Peach) protein is Auxin-binding protein ABP20 (ABP20).